Reading from the N-terminus, the 295-residue chain is 3-hydroxy-5-phosphonooxypentane-2,4-dione thiolase (295 aa).

The active-site Schiff-base intermediate with substrate is K203.

This sequence belongs to the DeoC/FbaB aldolase family. Homodecamer.

The protein resides in the cytoplasm. It carries out the reaction dihydroxyacetone phosphate + acetyl-CoA = 3-hydroxy-2,4-dioxopentyl phosphate + CoA. Functionally, involved in the degradation of phospho-AI-2, thereby terminating induction of the lsr operon and closing the AI-2 signaling cycle. Catalyzes the transfer of an acetyl moiety from 3-hydroxy-5-phosphonooxypentane-2,4-dione to CoA to form glycerone phosphate and acetyl-CoA. The chain is 3-hydroxy-5-phosphonooxypentane-2,4-dione thiolase from Enterobacter sp. (strain 638).